A 94-amino-acid chain; its full sequence is Cell division protein CrgA (94 aa).

2 helical membrane-spanning segments follow: residues Val31–Phe51 and Leu71–Met91.

The protein belongs to the CrgA family.

The protein resides in the cell membrane. In terms of biological role, involved in cell division. The polypeptide is Cell division protein CrgA (Mycobacterium sp. (strain JLS)).